Reading from the N-terminus, the 252-residue chain is Gastrula zinc finger protein XlCGF28.1 (252 aa).

9 C2H2-type zinc fingers span residues 6–28, 34–56, 62–84, 90–112, 118–140, 146–168, 174–196, 202–224, and 230–252; these read FTCN…LRSH, FTCS…FRGH, SACT…IRSH, YTCT…VRSH, FKCT…LRFH, TTCS…FRVH, FTCT…SYLH, YTCT…SYLH, and FTCT…SHTH.

This sequence belongs to the krueppel C2H2-type zinc-finger protein family.

The protein resides in the nucleus. In terms of biological role, may be involved in transcriptional regulation. The chain is Gastrula zinc finger protein XlCGF28.1 from Xenopus laevis (African clawed frog).